Reading from the N-terminus, the 248-residue chain is Deoxyribose-phosphate aldolase (248 aa).

Residue D106 is the Proton donor/acceptor of the active site. Catalysis depends on K168, which acts as the Schiff-base intermediate with acetaldehyde. K197 serves as the catalytic Proton donor/acceptor.

It belongs to the DeoC/FbaB aldolase family. DeoC type 1 subfamily.

The protein localises to the cytoplasm. The catalysed reaction is 2-deoxy-D-ribose 5-phosphate = D-glyceraldehyde 3-phosphate + acetaldehyde. The protein operates within carbohydrate degradation; 2-deoxy-D-ribose 1-phosphate degradation; D-glyceraldehyde 3-phosphate and acetaldehyde from 2-deoxy-alpha-D-ribose 1-phosphate: step 2/2. In terms of biological role, catalyzes a reversible aldol reaction between acetaldehyde and D-glyceraldehyde 3-phosphate to generate 2-deoxy-D-ribose 5-phosphate. The protein is Deoxyribose-phosphate aldolase of Sinorhizobium medicae (strain WSM419) (Ensifer medicae).